We begin with the raw amino-acid sequence, 124 residues long: Putative iron-sulfur cluster insertion protein ErpA 2 (124 aa).

Positions 52, 116, and 118 each coordinate iron-sulfur cluster.

The protein belongs to the HesB/IscA family. Homodimer. Requires iron-sulfur cluster as cofactor.

In terms of biological role, required for insertion of 4Fe-4S clusters. In Burkholderia vietnamiensis (strain G4 / LMG 22486) (Burkholderia cepacia (strain R1808)), this protein is Putative iron-sulfur cluster insertion protein ErpA 2.